A 731-amino-acid chain; its full sequence is MNDQTPIGSGCPVHQPGGVRSLLGRTNKDWWPDMLATEILTPNGPSNPMGEDFDYAKAFKSLDYYALKDDLKALMTDSQPWWPADYGHYGPFFIRMAWHAAGTYRTADGRGGANSGQQRFAPLDSWPDNGNLDKARRLLWPIKQKYGNKISWADLFILAGNVAIESMGGPVFGFGGGRVDVYEPERDIYWGSEDKWVNQGVQTRIDPAKGMETIEGPLAAIQMGLIYVNPEGPQGNPHDDEGMARDMKETFKRMAMNDEETVALTAGGHTFGKAHGNGDPSLLGPAPAGSDLAAQGFGWVSSHESGGIGEHAVTSGIEGAWTNTPREWTENYFRLLFDYDYELVKSPAGAWQWQPINQKEEDMAPAAWDPGIKVPTMMTTADMALKRDPAYRAISERFRNDHEAFKDAFARAWFKLTHRDMGPKVRYLGPEVPDEDLIWQDPIPAGTKPSDAEVQAVKDKIAASGLTVSQLIKTAWASASTFRKSDFRGGANGARVRLAPQKDWEVNEPAMLARVLDTLDGLRGSLSMADAIVLGGVVGLEKAIRDAGFNVAVPFTGGRGDATQEQTDVESFEVMEPEADAFRNYVGKKKLAVKVEEMMLDKASLLGLSVPEMTVLIGGLRVLGANHGERGHGHFTRRSGQLTNDFFVNLLDMTNVWKAVEGSNDQEYVATDRTTGGETWRATRADLIFGSNSELRAVAEVYAENGHEEKFVRDFVKAWTKVMNADRFDLA.

Residues 98 to 227 (WHAAGTYRTA…LAAIQMGLIY (130 aa)) constitute a cross-link (tryptophyl-tyrosyl-methioninium (Trp-Tyr) (with M-254)). His99 (proton acceptor) is an active-site residue. Positions 227 to 254 (YVNPEGPQGNPHDDEGMARDMKETFKRM) form a cross-link, tryptophyl-tyrosyl-methioninium (Tyr-Met) (with W-98). His269 serves as a coordination point for heme b.

It belongs to the peroxidase family. Peroxidase/catalase subfamily. As to quaternary structure, homodimer or homotetramer. It depends on heme b as a cofactor. Post-translationally, formation of the three residue Trp-Tyr-Met cross-link is important for the catalase, but not the peroxidase activity of the enzyme.

It carries out the reaction H2O2 + AH2 = A + 2 H2O. The catalysed reaction is 2 H2O2 = O2 + 2 H2O. Bifunctional enzyme with both catalase and broad-spectrum peroxidase activity. The chain is Catalase-peroxidase from Sphingopyxis alaskensis (strain DSM 13593 / LMG 18877 / RB2256) (Sphingomonas alaskensis).